The sequence spans 1896 residues: Plexin-A1 (1896 aa).

The signal sequence occupies residues 1–26 (MPLPPRSLQVLLLLLLLLLLLPGMWA). Positions 27 to 512 (EAGLPRAGGG…TEKQVTRVPV (486 aa)) constitute a Sema domain. The Extracellular segment spans residues 27 to 1244 (EAGLPRAGGG…VYSDSLLTLP (1218 aa)). Residue Asn-77 is glycosylated (N-linked (GlcNAc...) asparagine). Intrachain disulfides connect Cys-95/Cys-104, Cys-130/Cys-138, Cys-286/Cys-407, Cys-302/Cys-358, Cys-376/Cys-395, Cys-515/Cys-532, Cys-521/Cys-563, Cys-524/Cys-541, Cys-535/Cys-547, and Cys-598/Cys-617. N-linked (GlcNAc...) asparagine glycans are attached at residues Asn-660, Asn-672, and Asn-701. 4 consecutive IPT/TIG domains span residues 864-959 (PKIL…FTFV), 961-1045 (PTFY…YNYT), 1048-1147 (PTIL…FLYY), and 1150-1236 (PVLE…LQVY). An N-linked (GlcNAc...) asparagine glycan is attached at Asn-1043. N-linked (GlcNAc...) asparagine glycans are attached at residues Asn-1187 and Asn-1212. The helical transmembrane segment at 1245 to 1265 (AIVGIGGGGGLLLLVIVAVLI) threads the bilayer. Residues 1264–1317 (LIAYKRKSRDADRTLKRLQLQMDNLESRVALECKEAFAELQTDIHELTNDLDGA) adopt a coiled-coil conformation. Residues 1266–1896 (AYKRKSRDAD…QVVDTMALSS (631 aa)) are Cytoplasmic-facing.

The protein belongs to the plexin family. In terms of assembly, interacts directly with NRP1 and NRP2. Interacts with PLXN1B. Interacts with FARP2, RND1 and KDR/VEGFR2. Binding of SEMA3A leads to dissociation of FARP2. Interacts with CRMP1, DPYSL2/CRMP2, DPYSL3/CRMP3 and DPYSL4/CRMP4. Interacts (via TIG domains) with TREM2; the interaction mediates SEMA6D binding and signaling through TYROBP. Detected in fetal brain, lung, liver and kidney.

It is found in the cell membrane. Coreceptor for SEMA3A, SEMA3C, SEMA3F and SEMA6D. Necessary for signaling by class 3 semaphorins and subsequent remodeling of the cytoskeleton. Plays a role in axon guidance, invasive growth and cell migration. Class 3 semaphorins bind to a complex composed of a neuropilin and a plexin. The plexin modulates the affinity of the complex for specific semaphorins, and its cytoplasmic domain is required for the activation of down-stream signaling events in the cytoplasm. Acts as coreceptor of TREM2 for SEMA6D in dendritic cells and is involved in the generation of immune responses and skeletal homeostasis. The polypeptide is Plexin-A1 (Homo sapiens (Human)).